The following is a 282-amino-acid chain: U1 small nuclear ribonucleoprotein A (282 aa).

The residue at position 2 (Ala-2) is an N-acetylalanine. In terms of domain architecture, RRM 1 spans 10–89; that stretch reads HTIYINNLNE…KPMRIQYAKT (80 aa). N6-acetyllysine is present on Lys-60. Residues 101 to 141 form a disordered region; that stretch reads FVERDRKREKRKPKSQETPAAKKAVQGGAAAPVVGTVQGPV. The span at 119-141 shows a compositional bias: low complexity; it reads PAAKKAVQGGAAAPVVGTVQGPV. Arg-152 carries the post-translational modification Omega-N-methylarginine. In terms of domain architecture, RRM 2 spans 208-282; that stretch reads HILFLTNLPE…NAMKISFAKK (75 aa).

This sequence belongs to the RRM U1 A/B'' family. As to quaternary structure, U1 snRNP is composed of the 7 core Sm proteins SNRPB, SNRPD1, SNRPD2, SNRPD3, SNRPE, SNRPF and SNRPG that assemble in a heptameric protein ring on the Sm site of the small nuclear RNA to form the core snRNP, and at least three U1 snRNP-specific proteins SNRNP70/U1-70K, SNRPA/U1-A and SNRPC/U1-C. Interacts with SFPQ; component of a snRNP-free complex with SFPQ.

Its subcellular location is the nucleus. Component of the spliceosomal U1 snRNP, which is essential for recognition of the pre-mRNA 5' splice-site and the subsequent assembly of the spliceosome. U1 snRNP is the first snRNP to interact with pre-mRNA. This interaction is required for the subsequent binding of U2 snRNP and the U4/U6/U5 tri-snRNP. SNRPA binds stem loop II of U1 snRNA. In a snRNP-free form (SF-A) may be involved in coupled pre-mRNA splicing and polyadenylation process. May bind preferentially to the 5'-UGCAC-3' motif on RNAs. In Bos taurus (Bovine), this protein is U1 small nuclear ribonucleoprotein A (SNRPA).